The chain runs to 159 residues: Ribosomal RNA large subunit methyltransferase H (159 aa).

S-adenosyl-L-methionine-binding positions include Gly-108 and 127–132; that span reads FGKLTM.

It belongs to the RNA methyltransferase RlmH family. In terms of assembly, homodimer.

Its subcellular location is the cytoplasm. It catalyses the reaction pseudouridine(1915) in 23S rRNA + S-adenosyl-L-methionine = N(3)-methylpseudouridine(1915) in 23S rRNA + S-adenosyl-L-homocysteine + H(+). Specifically methylates the pseudouridine at position 1915 (m3Psi1915) in 23S rRNA. The chain is Ribosomal RNA large subunit methyltransferase H from Lactobacillus helveticus (strain DPC 4571).